A 132-amino-acid polypeptide reads, in one-letter code: Large ribosomal subunit protein uL14 (132 aa).

The protein belongs to the universal ribosomal protein uL14 family. Part of the 50S ribosomal subunit. Forms a cluster with proteins L3 and L24e, part of which may contact the 16S rRNA in 2 intersubunit bridges.

Its function is as follows. Binds to 23S rRNA. Forms part of two intersubunit bridges in the 70S ribosome. This chain is Large ribosomal subunit protein uL14, found in Methanococcus maripaludis (strain C7 / ATCC BAA-1331).